The chain runs to 498 residues: Cytochrome c-552 (498 aa).

An N-terminal signal peptide occupies residues 1-31; the sequence is MKNKERKLKSWQGWLIFSSSMVVVFCLGLLA. His119 is a heme c binding site. Cys148, Cys151, and Lys152 together coordinate heme. Heme c is bound by residues Cys186, Cys189, His190, Cys228, Cys231, and His232. Ca(2+) is bound by residues Glu234, Tyr235, Lys280, and Gln282. Residue Tyr235 coordinates substrate. Position 283 (His283) interacts with substrate. Positions 294, 301, 304, 305, 319, 332, 335, 336, and 411 each coordinate heme c.

It belongs to the cytochrome c-552 family. Ca(2+) serves as cofactor. The cofactor is heme c.

The protein resides in the periplasm. The enzyme catalyses 6 Fe(III)-[cytochrome c] + NH4(+) + 2 H2O = 6 Fe(II)-[cytochrome c] + nitrite + 8 H(+). Its pathway is nitrogen metabolism; nitrate reduction (assimilation). Functionally, catalyzes the reduction of nitrite to ammonia, consuming six electrons in the process. The sequence is that of Cytochrome c-552 from Porphyromonas gingivalis (strain ATCC BAA-308 / W83).